Consider the following 275-residue polypeptide: MKQSKGSRNYVFYAQHPEKEEEVPSWHEIKQTPVIMATIKGPGPAKYLRSSCTGYIAHDISMFQEPAYSLHTRHTKKRIIDINSPGPCYFLNPKVTRFGISTCPQVPMEERISNPRINCMPASCKYNLEKTRPSGERQPPQYTFGYRCPYRVMDPNPAPNQYQLPVTLGTNIPVFRAAPSYSLASTNKNWFHKENIAGGPGPAMHTRPEPSVYQNRSPLFSMAKRFGCPLDHTHRPGPGSHDIQPVTVHKPRIPAFTMGIKHSPHLCPLIVDICD.

STPGR repeat units lie at residues 200-225 and 236-261; these read PGPA…MAKR and PGPG…MGIK.

This sequence belongs to the CIMAP family.

The sequence is that of Protein CIMAP1C (CIMAP1C) from Mus musculus (Mouse).